Here is a 180-residue protein sequence, read N- to C-terminus: ATP synthase subunit delta (180 aa).

The protein belongs to the ATPase delta chain family. As to quaternary structure, F-type ATPases have 2 components, F(1) - the catalytic core - and F(0) - the membrane proton channel. F(1) has five subunits: alpha(3), beta(3), gamma(1), delta(1), epsilon(1). F(0) has three main subunits: a(1), b(2) and c(10-14). The alpha and beta chains form an alternating ring which encloses part of the gamma chain. F(1) is attached to F(0) by a central stalk formed by the gamma and epsilon chains, while a peripheral stalk is formed by the delta and b chains.

It is found in the cell inner membrane. Functionally, f(1)F(0) ATP synthase produces ATP from ADP in the presence of a proton or sodium gradient. F-type ATPases consist of two structural domains, F(1) containing the extramembraneous catalytic core and F(0) containing the membrane proton channel, linked together by a central stalk and a peripheral stalk. During catalysis, ATP synthesis in the catalytic domain of F(1) is coupled via a rotary mechanism of the central stalk subunits to proton translocation. Its function is as follows. This protein is part of the stalk that links CF(0) to CF(1). It either transmits conformational changes from CF(0) to CF(1) or is implicated in proton conduction. The polypeptide is ATP synthase subunit delta (Cupriavidus necator (strain ATCC 17699 / DSM 428 / KCTC 22496 / NCIMB 10442 / H16 / Stanier 337) (Ralstonia eutropha)).